The chain runs to 252 residues: Mediator of RNA polymerase II transcription subunit 4 (252 aa).

Coiled coils occupy residues 5–31 and 70–112; these read KKST…ETLA and KTHQ…QAKE. Residues 213–252 are disordered; that stretch reads MLPPNHSNEFLMESLGPNKENEEDVEVMSTDSSSSSSDSD. Over residues 241–252 the composition is skewed to low complexity; sequence STDSSSSSSDSD.

It belongs to the Mediator complex subunit 4 family. In terms of assembly, component of the Mediator complex.

It is found in the nucleus. Component of the Mediator complex, a coactivator involved in the regulated transcription of nearly all RNA polymerase II-dependent genes. Mediator functions as a bridge to convey information from gene-specific regulatory proteins to the basal RNA polymerase II transcription machinery. Mediator is recruited to promoters by direct interactions with regulatory proteins and serves as a scaffold for the assembly of a functional preinitiation complex with RNA polymerase II and the general transcription factors. In Xenopus laevis (African clawed frog), this protein is Mediator of RNA polymerase II transcription subunit 4 (med4).